Reading from the N-terminus, the 432-residue chain is Adenylosuccinate synthetase (432 aa).

GTP is bound by residues 13–19 (GDEGKGK) and 41–43 (GHT). Asp-14 (proton acceptor) is an active-site residue. Positions 14 and 41 each coordinate Mg(2+). Residues 14 to 17 (DEGK), 39 to 42 (NAGH), Thr-130, Arg-144, Gln-225, Thr-240, and Arg-304 each bind IMP. His-42 functions as the Proton donor in the catalytic mechanism. Position 300 to 306 (300 to 306 (AVTGRPR)) interacts with substrate. GTP is bound by residues Arg-306, 332-334 (KLD), and 415-417 (STG).

The protein belongs to the adenylosuccinate synthetase family. In terms of assembly, homodimer. Mg(2+) is required as a cofactor.

It is found in the cytoplasm. It carries out the reaction IMP + L-aspartate + GTP = N(6)-(1,2-dicarboxyethyl)-AMP + GDP + phosphate + 2 H(+). It participates in purine metabolism; AMP biosynthesis via de novo pathway; AMP from IMP: step 1/2. In terms of biological role, plays an important role in the de novo pathway of purine nucleotide biosynthesis. Catalyzes the first committed step in the biosynthesis of AMP from IMP. This is Adenylosuccinate synthetase from Haemophilus influenzae (strain PittGG).